Consider the following 386-residue polypeptide: Probable mannan endo-1,4-beta-mannosidase A (386 aa).

The signal sequence occupies residues 1–21 (MKLNPSLLTAAGLVSAQLASA). 2 residues coordinate substrate: Trp95 and Asn207. Residue Glu208 is the Proton donor of the active site. A substrate-binding site is contributed by Tyr283. Glu316 serves as the catalytic Nucleophile. The N-linked (GlcNAc...) asparagine glycan is linked to Asn336. Position 346 (Trp346) interacts with substrate.

Belongs to the glycosyl hydrolase 5 (cellulase A) family.

It localises to the secreted. It catalyses the reaction Random hydrolysis of (1-&gt;4)-beta-D-mannosidic linkages in mannans, galactomannans and glucomannans.. Its function is as follows. Endo-1,4-mannanase, a crucial enzyme for depolymerization of seed galactomannans and wood galactoglucomannans. This is Probable mannan endo-1,4-beta-mannosidase A (manA) from Aspergillus oryzae (strain ATCC 42149 / RIB 40) (Yellow koji mold).